Reading from the N-terminus, the 403-residue chain is Histidine decarboxylase (403 aa).

His120 contacts substrate. Position 233 is an N6-(pyridoxal phosphate)lysine (Lys233).

This sequence belongs to the group II decarboxylase family. In terms of assembly, homotetramer. Pyridoxal 5'-phosphate serves as cofactor.

It catalyses the reaction L-histidine + H(+) = histamine + CO2. In Pseudomonas entomophila (strain L48), this protein is Histidine decarboxylase.